The sequence spans 405 residues: Probable tRNA sulfurtransferase (405 aa).

Residues 60–165 (DQVMARLSQV…REAIYLSTKT (106 aa)) enclose the THUMP domain. ATP contacts are provided by residues 183–184 (ML), 208–209 (HF), arginine 265, glycine 287, and glutamine 296.

The protein belongs to the ThiI family.

The protein resides in the cytoplasm. The enzyme catalyses [ThiI sulfur-carrier protein]-S-sulfanyl-L-cysteine + a uridine in tRNA + 2 reduced [2Fe-2S]-[ferredoxin] + ATP + H(+) = [ThiI sulfur-carrier protein]-L-cysteine + a 4-thiouridine in tRNA + 2 oxidized [2Fe-2S]-[ferredoxin] + AMP + diphosphate. It catalyses the reaction [ThiS sulfur-carrier protein]-C-terminal Gly-Gly-AMP + S-sulfanyl-L-cysteinyl-[cysteine desulfurase] + AH2 = [ThiS sulfur-carrier protein]-C-terminal-Gly-aminoethanethioate + L-cysteinyl-[cysteine desulfurase] + A + AMP + 2 H(+). The protein operates within cofactor biosynthesis; thiamine diphosphate biosynthesis. In terms of biological role, catalyzes the ATP-dependent transfer of a sulfur to tRNA to produce 4-thiouridine in position 8 of tRNAs, which functions as a near-UV photosensor. Also catalyzes the transfer of sulfur to the sulfur carrier protein ThiS, forming ThiS-thiocarboxylate. This is a step in the synthesis of thiazole, in the thiamine biosynthesis pathway. The sulfur is donated as persulfide by IscS. The chain is Probable tRNA sulfurtransferase from Lacticaseibacillus casei (strain BL23) (Lactobacillus casei).